A 426-amino-acid polypeptide reads, in one-letter code: Glucose-6-phosphate isomerase (426 aa).

The active-site Proton donor is the glutamate 282. Active-site residues include histidine 303 and lysine 417.

This sequence belongs to the GPI family.

It localises to the cytoplasm. The enzyme catalyses alpha-D-glucose 6-phosphate = beta-D-fructose 6-phosphate. The protein operates within carbohydrate biosynthesis; gluconeogenesis. It functions in the pathway carbohydrate degradation; glycolysis; D-glyceraldehyde 3-phosphate and glycerone phosphate from D-glucose: step 2/4. Catalyzes the reversible isomerization of glucose-6-phosphate to fructose-6-phosphate. This is Glucose-6-phosphate isomerase from Aster yellows witches'-broom phytoplasma (strain AYWB).